Here is a 465-residue protein sequence, read N- to C-terminus: MQIFDSVQKTKVTFEPIREGEASIYVCGPTVYDDAHLGHARSSLAFDLLSRTLKALGYKVIMAKNFTDIDDKIIKKVEETGKSMQEITSYYIQRYLDEMEQLGVQRADIEPKATESLDAIEQMIQTLIDKDFAYVVSNGDVYFDTSKDSHYGDISHKVSDDDTQSRVEHNSEKRNPRDFALWKACKGEEDICFGAPFSSGRPGWHIECSAMIEKYFKGNGQYSIDIHGGGADLLFPHHENEAAQSRCATGHELAKYWMHNGFVQINGEKMSKSLGNSFFLKDALEVYGGEVLRYYLNSVHYRNDFNFNEEDLQTAKKRLDKLYRLKKRVLPGKASTVNKAFKQALLNAMSDDLNISIALAVIDEMIAETNEKLDTDPKNKALKKETIANIEFIDTLLGFGGKEPFSYFQIGVDEALKEKIEILLQERTEAKKAKDFATSDAIRNELIDMGISIMDTAEGTVWEKA.

Cys-27 serves as a coordination point for Zn(2+). A 'HIGH' region motif is present at residues 29 to 39 (PTVYDDAHLGH). Residues 153–173 (DISHKVSDDDTQSRVEHNSEK) are disordered. The Zn(2+) site is built by Cys-208, His-237, and Glu-241. A 'KMSKS' region motif is present at residues 269-273 (KMSKS). Lys-272 serves as a coordination point for ATP.

It belongs to the class-I aminoacyl-tRNA synthetase family. As to quaternary structure, monomer. Zn(2+) is required as a cofactor.

The protein resides in the cytoplasm. The enzyme catalyses tRNA(Cys) + L-cysteine + ATP = L-cysteinyl-tRNA(Cys) + AMP + diphosphate. The polypeptide is Cysteine--tRNA ligase (Sulfurovum sp. (strain NBC37-1)).